The sequence spans 320 residues: Biotin synthase (320 aa).

The 230-residue stretch at 46–275 (NMGRRVDLCS…YAHIRYAGGR (230 aa)) folds into the Radical SAM core domain. [4Fe-4S] cluster is bound by residues cysteine 64, cysteine 68, and cysteine 71. Residues serine 108, cysteine 140, cysteine 200, and arginine 270 each contribute to the [2Fe-2S] cluster site.

The protein belongs to the radical SAM superfamily. Biotin synthase family. Homodimer. Requires [4Fe-4S] cluster as cofactor. It depends on [2Fe-2S] cluster as a cofactor.

The enzyme catalyses (4R,5S)-dethiobiotin + (sulfur carrier)-SH + 2 reduced [2Fe-2S]-[ferredoxin] + 2 S-adenosyl-L-methionine = (sulfur carrier)-H + biotin + 2 5'-deoxyadenosine + 2 L-methionine + 2 oxidized [2Fe-2S]-[ferredoxin]. It participates in cofactor biosynthesis; biotin biosynthesis; biotin from 7,8-diaminononanoate: step 2/2. Its function is as follows. Catalyzes the conversion of dethiobiotin (DTB) to biotin by the insertion of a sulfur atom into dethiobiotin via a radical-based mechanism. In Acetivibrio thermocellus (strain ATCC 27405 / DSM 1237 / JCM 9322 / NBRC 103400 / NCIMB 10682 / NRRL B-4536 / VPI 7372) (Clostridium thermocellum), this protein is Biotin synthase.